Here is a 308-residue protein sequence, read N- to C-terminus: UDP-N-acetylenolpyruvoylglucosamine reductase (308 aa).

The 164-residue stretch at 24–187 (RVGGPADWLF…VSASLQGVPG (164 aa)) folds into the FAD-binding PCMH-type domain. Arg167 is an active-site residue. The disordered stretch occupies residues 199–230 (QLDKRDQTQPTKERSAGSTFRNPAGFSSTGRA). A compositionally biased stretch (basic and acidic residues) spans 200 to 213 (LDKRDQTQPTKERS). Polar residues predominate over residues 214-228 (AGSTFRNPAGFSSTG). Ser216 (proton donor) is an active-site residue. Glu298 is an active-site residue.

This sequence belongs to the MurB family. FAD serves as cofactor.

Its subcellular location is the cytoplasm. The enzyme catalyses UDP-N-acetyl-alpha-D-muramate + NADP(+) = UDP-N-acetyl-3-O-(1-carboxyvinyl)-alpha-D-glucosamine + NADPH + H(+). It participates in cell wall biogenesis; peptidoglycan biosynthesis. Cell wall formation. The protein is UDP-N-acetylenolpyruvoylglucosamine reductase of Ruegeria pomeroyi (strain ATCC 700808 / DSM 15171 / DSS-3) (Silicibacter pomeroyi).